Here is a 388-residue protein sequence, read N- to C-terminus: Succinate--CoA ligase [ADP-forming] subunit beta (388 aa).

The 237-residue stretch at 9-245 folds into the ATP-grasp domain; the sequence is KELLASYGLP…KSQENERELK (237 aa). ATP contacts are provided by residues K46, 53-55, E100, Y103, and E108; that span reads GRG. Positions 200 and 214 each coordinate Mg(2+). Residues N265 and 322-324 each bind substrate; that span reads GIV.

Belongs to the succinate/malate CoA ligase beta subunit family. In terms of assembly, heterotetramer of two alpha and two beta subunits. It depends on Mg(2+) as a cofactor.

The catalysed reaction is succinate + ATP + CoA = succinyl-CoA + ADP + phosphate. It catalyses the reaction GTP + succinate + CoA = succinyl-CoA + GDP + phosphate. It functions in the pathway carbohydrate metabolism; tricarboxylic acid cycle; succinate from succinyl-CoA (ligase route): step 1/1. Succinyl-CoA synthetase functions in the citric acid cycle (TCA), coupling the hydrolysis of succinyl-CoA to the synthesis of either ATP or GTP and thus represents the only step of substrate-level phosphorylation in the TCA. The beta subunit provides nucleotide specificity of the enzyme and binds the substrate succinate, while the binding sites for coenzyme A and phosphate are found in the alpha subunit. The sequence is that of Succinate--CoA ligase [ADP-forming] subunit beta from Neisseria gonorrhoeae (strain NCCP11945).